The chain runs to 613 residues: Chaperone protein dnaK (613 aa).

This sequence belongs to the heat shock protein 70 family.

It localises to the plastid. The protein localises to the chloroplast. In terms of biological role, acts as a chaperone. The protein is Chaperone protein dnaK of Phaeodactylum tricornutum (strain CCAP 1055/1).